Consider the following 375-residue polypeptide: Chaperone protein DnaJ (375 aa).

One can recognise a J domain in the interval 5–70 (DYYEVLGVAR…NKRRAYDAHG (66 aa)). Residues 131–208 (GIERRIEIPT…CHGAGRVEED (78 aa)) form a CR-type zinc finger. Residues Cys144, Cys147, Cys160, Cys163, Cys182, Cys185, Cys196, and Cys199 each coordinate Zn(2+). CXXCXGXG motif repeat units lie at residues 144–151 (CAPCHGSG), 160–167 (CGTCHGRG), 182–189 (CPHCDGRG), and 196–203 (CKTCHGAG).

Belongs to the DnaJ family. Homodimer. It depends on Zn(2+) as a cofactor.

The protein resides in the cytoplasm. In terms of biological role, participates actively in the response to hyperosmotic and heat shock by preventing the aggregation of stress-denatured proteins and by disaggregating proteins, also in an autonomous, DnaK-independent fashion. Unfolded proteins bind initially to DnaJ; upon interaction with the DnaJ-bound protein, DnaK hydrolyzes its bound ATP, resulting in the formation of a stable complex. GrpE releases ADP from DnaK; ATP binding to DnaK triggers the release of the substrate protein, thus completing the reaction cycle. Several rounds of ATP-dependent interactions between DnaJ, DnaK and GrpE are required for fully efficient folding. Also involved, together with DnaK and GrpE, in the DNA replication of plasmids through activation of initiation proteins. In Xanthomonas euvesicatoria pv. vesicatoria (strain 85-10) (Xanthomonas campestris pv. vesicatoria), this protein is Chaperone protein DnaJ.